A 216-amino-acid polypeptide reads, in one-letter code: 3,4-dihydroxy-2-butanone 4-phosphate synthase (216 aa).

Residues 33–34 (RE), Asp38, 146–150 (RRGHT), and Glu170 contribute to the D-ribulose 5-phosphate site. Mg(2+) is bound at residue Glu34. His149 lines the Mg(2+) pocket.

This sequence belongs to the DHBP synthase family. Homodimer. Mg(2+) serves as cofactor. It depends on Mn(2+) as a cofactor.

The enzyme catalyses D-ribulose 5-phosphate = (2S)-2-hydroxy-3-oxobutyl phosphate + formate + H(+). The protein operates within cofactor biosynthesis; riboflavin biosynthesis; 2-hydroxy-3-oxobutyl phosphate from D-ribulose 5-phosphate: step 1/1. In terms of biological role, catalyzes the conversion of D-ribulose 5-phosphate to formate and 3,4-dihydroxy-2-butanone 4-phosphate. This chain is 3,4-dihydroxy-2-butanone 4-phosphate synthase, found in Pseudomonas putida (strain ATCC 47054 / DSM 6125 / CFBP 8728 / NCIMB 11950 / KT2440).